Consider the following 200-residue polypeptide: Probable molybdenum cofactor guanylyltransferase (200 aa).

GTP is bound by residues 9-11 (LAG), K21, D69, and D100. D100 is a Mg(2+) binding site.

This sequence belongs to the MobA family. Mg(2+) serves as cofactor.

The protein localises to the cytoplasm. It carries out the reaction Mo-molybdopterin + GTP + H(+) = Mo-molybdopterin guanine dinucleotide + diphosphate. Functionally, transfers a GMP moiety from GTP to Mo-molybdopterin (Mo-MPT) cofactor (Moco or molybdenum cofactor) to form Mo-molybdopterin guanine dinucleotide (Mo-MGD) cofactor. This chain is Probable molybdenum cofactor guanylyltransferase, found in Bacillus cereus (strain ATCC 10987 / NRS 248).